A 493-amino-acid chain; its full sequence is MAKIMIQGTASSVGKSLIVAALCRIFKQDGYSVCPFKSQNMSLNSYITLDGKEMGRAQVLQAYATGLEPEVYMNPILLKPTSDRKCQIIVNGKVYGNSTAMGYHNLKLKFKDMLKEHFNKLEEEFDIVVMEGAGSPAEINLRDRDIVNMGMAELVDAPVLLVGDIDKGGVFASLAGTMLLLKDGEKERVKGTIINKFRGDVEILKPGLDMLEDIVHIPCLGVVPYTRLQLEDEDGAVEFNKKAYAPIDIAVIKMPHISNFTDLDALKSEEDVSIRFITSKEEFKEPDLLIIPGSKNTIEDLLYLRQCGLEESIKEYSKDGKIIGICGGYQVLGSKIKDPHNVETDLGEIDGLNLLDMKTIFEKEKITTRVSAKLLNEEIENTVYGYEIHMGISEYSENVKPLFKIYNKNGEKVGYFDGAINEKGNVMGTYIHGVFDGVVFREKIINELRVKKGLKKKKSQIYEHMREKELDKLADIVRQSLDMEKIYSIIGMK.

The GATase cobBQ-type domain occupies 246–440 (PIDIAVIKMP…IHGVFDGVVF (195 aa)). Cysteine 326 serves as the catalytic Nucleophile. The active site involves histidine 432.

The protein belongs to the CobB/CobQ family. CobQ subfamily.

It functions in the pathway cofactor biosynthesis; adenosylcobalamin biosynthesis. Catalyzes amidations at positions B, D, E, and G on adenosylcobyrinic A,C-diamide. NH(2) groups are provided by glutamine, and one molecule of ATP is hydrogenolyzed for each amidation. The sequence is that of Cobyric acid synthase from Clostridium botulinum (strain Okra / Type B1).